A 501-amino-acid polypeptide reads, in one-letter code: Glycerol kinase (501 aa).

An ADP-binding site is contributed by Thr-11. ATP-binding residues include Thr-11, Thr-12, and Ser-13. Thr-11 contributes to the sn-glycerol 3-phosphate binding site. ADP is bound at residue Arg-15. Sn-glycerol 3-phosphate contacts are provided by Arg-81, Glu-82, Tyr-133, and Asp-242. Arg-81, Glu-82, Tyr-133, Asp-242, and Gln-243 together coordinate glycerol. 2 residues coordinate ADP: Thr-264 and Gly-307. Residues Thr-264, Gly-307, Gln-311, and Gly-409 each coordinate ATP. Gly-409 and Asn-413 together coordinate ADP.

The protein belongs to the FGGY kinase family.

The enzyme catalyses glycerol + ATP = sn-glycerol 3-phosphate + ADP + H(+). The protein operates within polyol metabolism; glycerol degradation via glycerol kinase pathway; sn-glycerol 3-phosphate from glycerol: step 1/1. Its activity is regulated as follows. Inhibited by fructose 1,6-bisphosphate (FBP). In terms of biological role, key enzyme in the regulation of glycerol uptake and metabolism. Catalyzes the phosphorylation of glycerol to yield sn-glycerol 3-phosphate. The protein is Glycerol kinase of Borrelia garinii subsp. bavariensis (strain ATCC BAA-2496 / DSM 23469 / PBi) (Borreliella bavariensis).